A 46-amino-acid polypeptide reads, in one-letter code: Peroxidase 1 (46 aa).

This sequence belongs to the peroxidase family. Classical plant (class III) peroxidase subfamily. Requires heme b as cofactor. It depends on Ca(2+) as a cofactor.

It localises to the secreted. The enzyme catalyses 2 a phenolic donor + H2O2 = 2 a phenolic radical donor + 2 H2O. Removal of H(2)O(2), oxidation of toxic reductants, biosynthesis and degradation of lignin, suberization, auxin catabolism, response to environmental stresses such as wounding, pathogen attack and oxidative stress. These functions might be dependent on each isozyme/isoform in each plant tissue. This chain is Peroxidase 1, found in Catharanthus roseus (Madagascar periwinkle).